The sequence spans 347 residues: Heat-inducible transcription repressor HrcA (347 aa).

Belongs to the HrcA family.

Negative regulator of class I heat shock genes (grpE-dnaK-dnaJ and groELS operons). Prevents heat-shock induction of these operons. The protein is Heat-inducible transcription repressor HrcA of Enterococcus faecalis (strain ATCC 700802 / V583).